The primary structure comprises 545 residues: Chaperonin GroEL 3 (545 aa).

ATP contacts are provided by residues 30–33 (TLGP), lysine 51, 87–91 (DGTTT), glycine 415, and aspartate 496.

It belongs to the chaperonin (HSP60) family. Forms a cylinder of 14 subunits composed of two heptameric rings stacked back-to-back. Interacts with the co-chaperonin GroES.

The protein resides in the cytoplasm. It catalyses the reaction ATP + H2O + a folded polypeptide = ADP + phosphate + an unfolded polypeptide.. Together with its co-chaperonin GroES, plays an essential role in assisting protein folding. The GroEL-GroES system forms a nano-cage that allows encapsulation of the non-native substrate proteins and provides a physical environment optimized to promote and accelerate protein folding. The chain is Chaperonin GroEL 3 from Nitrobacter hamburgensis (strain DSM 10229 / NCIMB 13809 / X14).